A 631-amino-acid chain; its full sequence is 1-deoxy-D-xylulose-5-phosphate synthase (631 aa).

Thiamine diphosphate is bound by residues histidine 74 and 115 to 117 (GHS). Mg(2+) is bound at residue aspartate 146. Thiamine diphosphate is bound by residues 147 to 148 (GA), asparagine 175, tyrosine 286, and glutamate 368. Asparagine 175 is a Mg(2+) binding site.

Belongs to the transketolase family. DXPS subfamily. As to quaternary structure, homodimer. Requires Mg(2+) as cofactor. The cofactor is thiamine diphosphate.

The catalysed reaction is D-glyceraldehyde 3-phosphate + pyruvate + H(+) = 1-deoxy-D-xylulose 5-phosphate + CO2. It participates in metabolic intermediate biosynthesis; 1-deoxy-D-xylulose 5-phosphate biosynthesis; 1-deoxy-D-xylulose 5-phosphate from D-glyceraldehyde 3-phosphate and pyruvate: step 1/1. Catalyzes the acyloin condensation reaction between C atoms 2 and 3 of pyruvate and glyceraldehyde 3-phosphate to yield 1-deoxy-D-xylulose-5-phosphate (DXP). This chain is 1-deoxy-D-xylulose-5-phosphate synthase, found in Natranaerobius thermophilus (strain ATCC BAA-1301 / DSM 18059 / JW/NM-WN-LF).